A 255-amino-acid chain; its full sequence is Thiazole synthase (255 aa).

Residue K95 is the Schiff-base intermediate with DXP of the active site. Residues G156, 182-183 (AG), and 204-205 (NT) each bind 1-deoxy-D-xylulose 5-phosphate.

This sequence belongs to the ThiG family. As to quaternary structure, homotetramer. Forms heterodimers with either ThiH or ThiS.

It is found in the cytoplasm. It carries out the reaction [ThiS sulfur-carrier protein]-C-terminal-Gly-aminoethanethioate + 2-iminoacetate + 1-deoxy-D-xylulose 5-phosphate = [ThiS sulfur-carrier protein]-C-terminal Gly-Gly + 2-[(2R,5Z)-2-carboxy-4-methylthiazol-5(2H)-ylidene]ethyl phosphate + 2 H2O + H(+). The protein operates within cofactor biosynthesis; thiamine diphosphate biosynthesis. In terms of biological role, catalyzes the rearrangement of 1-deoxy-D-xylulose 5-phosphate (DXP) to produce the thiazole phosphate moiety of thiamine. Sulfur is provided by the thiocarboxylate moiety of the carrier protein ThiS. In vitro, sulfur can be provided by H(2)S. This Photorhabdus laumondii subsp. laumondii (strain DSM 15139 / CIP 105565 / TT01) (Photorhabdus luminescens subsp. laumondii) protein is Thiazole synthase.